The sequence spans 695 residues: Zinc finger SWIM domain-containing protein 3 (695 aa).

Positions 434 to 490 (NAPKLRRTRLPSTPPRPKKPFRICGGGDTRLPVEEVEETKADSAQSQLPQPQDQSSK) are disordered. The span at 475–489 (DSAQSQLPQPQDQSS) shows a compositional bias: low complexity. The SWIM-type zinc-finger motif lies at 530–571 (VAVQLLENSHQVSKDGCSCSCSFQQCYHLPCRHILALLHTSQ).

The sequence is that of Zinc finger SWIM domain-containing protein 3 (Zswim3) from Mus musculus (Mouse).